The sequence spans 5101 residues: Malformin synthetase mlfA (5101 aa).

Residues 225 to 616 form an adenylation 1 region; sequence ERHAANRPHS…CGRADTQVKL (392 aa). The region spanning 757–830 is the Carrier 1 domain; it reads SRLEQKIQLA…EAASLAEVQE (74 aa). Residue Ser-791 is modified to O-(pantetheine 4'-phosphoryl)serine. Residues 868–1299 form a condensation 1 region; sequence EDVFPCTTMQ…ALNTLSLLQA (432 aa). An adenylation 2 region spans residues 1327–1716; it reads DRWVTRQPEG…GRKDTQVKLR (390 aa). Residues 1854–1931 form the Carrier 2 domain; it reads TPTLELERTL…QLAAEVGEPA (78 aa). O-(pantetheine 4'-phosphoryl)serine is present on Ser-1891. Disordered stretches follow at residues 1932–1961 and 1994–2020; these read GQSASSASSTTEEGFTFSTPDDSSTNDGVD and GGSSSNKTPSVSSSSSSSSSSKRKKNA. Low complexity-rich tracts occupy residues 1934 to 1958 and 1996 to 2013; these read SASSASSTTEEGFTFSTPDDSSTND and SSSNKTPSVSSSSSSSSS. The segment at 2066-2481 is condensation 2; it reads EDIYPATALQ…AVSCSDKETL (416 aa). An adenylation 3 region spans residues 2504-2896; sequence RRTPHAPAVC…IGRRDGQLKL (393 aa). Residues 3032–3108 enclose the Carrier 3 domain; it reads RPVTSQEHEM…QLICHLNTIR (77 aa). Ser-3069 is subject to O-(pantetheine 4'-phosphoryl)serine. 2 condensation regions span residues 3125 to 3590 and 3611 to 4030; these read WVAL…TYDQ and NIYP…EHLV. Residues 4055 to 4445 form an adenylation 4 region; sequence HNSRQAVCAW…VGRKDNQIKF (391 aa). One can recognise a Carrier 4 domain in the interval 4579 to 4655; sequence MPSTAAERKM…DLSDQAKSLI (77 aa). Ser-4616 is subject to O-(pantetheine 4'-phosphoryl)serine. The condensation 5 stretch occupies residues 4712 to 5097; that stretch reads IVVDIPGPID…KIVGLLRHPE (386 aa).

It belongs to the NRP synthetase family.

It functions in the pathway secondary metabolite biosynthesis. Functionally, nonribosomal peptide synthetase; part of the gene cluster that mediates the biosynthesis of malformins, cyclic pentapeptides with a disulfide bond between 2 consecutive cysteins, that show potential anti-tumor as well as antimalarial and antitrypanosomal properties. The nonribosomal peptide synthetase mlfA is responsible of the formation of the cyclic pentapeptide. The malformin biosynthesis clusters in malformin-producing fungi also contain enzymes involved in the formation of the disulfide bond between the two consecutive cysteins within malformins, in addition to additional tailoring enzymes such as methyltransferases or oxidoreductases. They are also composed of up to 4 major facilitator superfamily transporters, and transcription factors probably involved in the regulation of the expression of those clusters. The protein is Malformin synthetase mlfA of Aspergillus kawachii (strain NBRC 4308) (White koji mold).